Consider the following 54-residue polypeptide: Califin-C (54 aa).

Cysteines 25 and 53 form a disulfide. At L36 the chain carries Leucine amide.

The protein belongs to the molluscan ELH family. As to quaternary structure, this protein consists of a large 36-residue subunit, bound by a single disulfide-bond to a small 18-residue subunit.

It is found in the secreted. Injected in sexually mature animals califin C excites LB and LC cells of the abdominal ganglion and cause egg-laying. This Aplysia californica (California sea hare) protein is Califin-C.